The sequence spans 44 residues: Non-structural protein 7b (44 aa).

Residues 9–29 (FYLCFLAFLLFLVLIMLLIFW) traverse the membrane as a helical segment.

It localises to the host membrane. This Bat coronavirus HKU3 (BtCoV) protein is Non-structural protein 7b.